Reading from the N-terminus, the 396-residue chain is Na(+)/H(+) antiporter NhaA 1 (396 aa).

11 consecutive transmembrane segments (helical) span residues leucine 18–leucine 38, leucine 60–valine 80, isoleucine 95–glycine 115, glycine 126–glycine 146, leucine 155–phenylalanine 175, alanine 178–leucine 198, threonine 201–leucine 221, valine 262–isoleucine 282, isoleucine 295–valine 315, glycine 333–leucine 353, and alanine 362–leucine 382.

This sequence belongs to the NhaA Na(+)/H(+) (TC 2.A.33) antiporter family.

The protein localises to the cell inner membrane. The enzyme catalyses Na(+)(in) + 2 H(+)(out) = Na(+)(out) + 2 H(+)(in). Its function is as follows. Na(+)/H(+) antiporter that extrudes sodium in exchange for external protons. In Syntrophotalea carbinolica (strain DSM 2380 / NBRC 103641 / GraBd1) (Pelobacter carbinolicus), this protein is Na(+)/H(+) antiporter NhaA 1.